A 236-amino-acid chain; its full sequence is Small ribosomal subunit protein eS6 (236 aa).

This sequence belongs to the eukaryotic ribosomal protein eS6 family. As to quaternary structure, component of the small ribosomal subunit. Part of the small subunit (SSU) processome, composed of more than 70 proteins and the RNA chaperone small nucleolar RNA (snoRNA) U3. Post-translationally, ribosomal protein S6 is the major substrate of protein kinases in eukaryote ribosomes.

Its subcellular location is the cytoplasm. It is found in the nucleus. It localises to the nucleolus. Its function is as follows. Component of the 40S small ribosomal subunit. Plays an important role in controlling cell growth and proliferation through the selective translation of particular classes of mRNA. Part of the small subunit (SSU) processome, first precursor of the small eukaryotic ribosomal subunit. During the assembly of the SSU processome in the nucleolus, many ribosome biogenesis factors, an RNA chaperone and ribosomal proteins associate with the nascent pre-rRNA and work in concert to generate RNA folding, modifications, rearrangements and cleavage as well as targeted degradation of pre-ribosomal RNA by the RNA exosome. The protein is Small ribosomal subunit protein eS6 (rps6) of Dictyostelium discoideum (Social amoeba).